The sequence spans 482 residues: Probable glycine dehydrogenase (decarboxylating) subunit 2 (482 aa).

Position 264 is an N6-(pyridoxal phosphate)lysine (K264).

This sequence belongs to the GcvP family. C-terminal subunit subfamily. The glycine cleavage system is composed of four proteins: P, T, L and H. In this organism, the P 'protein' is a heterodimer of two subunits. The cofactor is pyridoxal 5'-phosphate.

The catalysed reaction is N(6)-[(R)-lipoyl]-L-lysyl-[glycine-cleavage complex H protein] + glycine + H(+) = N(6)-[(R)-S(8)-aminomethyldihydrolipoyl]-L-lysyl-[glycine-cleavage complex H protein] + CO2. Its function is as follows. The glycine cleavage system catalyzes the degradation of glycine. The P protein binds the alpha-amino group of glycine through its pyridoxal phosphate cofactor; CO(2) is released and the remaining methylamine moiety is then transferred to the lipoamide cofactor of the H protein. This chain is Probable glycine dehydrogenase (decarboxylating) subunit 2, found in Treponema denticola (strain ATCC 35405 / DSM 14222 / CIP 103919 / JCM 8153 / KCTC 15104).